The primary structure comprises 37 residues: Photosystem I reaction center subunit VIII (37 aa).

A helical transmembrane segment spans residues 7–27 (LPSIFVPLVGLVFPAIAMASL).

This sequence belongs to the PsaI family.

The protein resides in the plastid. It localises to the chloroplast thylakoid membrane. May help in the organization of the PsaL subunit. This chain is Photosystem I reaction center subunit VIII, found in Populus alba (White poplar).